Reading from the N-terminus, the 827-residue chain is DNA gyrase subunit A (827 aa).

Positions 38 to 501 constitute a Topo IIA-type catalytic domain; the sequence is LPDARDGLKP…SYENIDIEDL (464 aa). Tyrosine 126 serves as the catalytic O-(5'-phospho-DNA)-tyrosine intermediate. The GyrA-box signature appears at 528–534; that stretch reads QNRGGKG.

The protein belongs to the type II topoisomerase GyrA/ParC subunit family. In terms of assembly, heterotetramer, composed of two GyrA and two GyrB chains. In the heterotetramer, GyrA contains the active site tyrosine that forms a transient covalent intermediate with DNA, while GyrB binds cofactors and catalyzes ATP hydrolysis.

The protein resides in the cytoplasm. The enzyme catalyses ATP-dependent breakage, passage and rejoining of double-stranded DNA.. Functionally, a type II topoisomerase that negatively supercoils closed circular double-stranded (ds) DNA in an ATP-dependent manner to modulate DNA topology and maintain chromosomes in an underwound state. Negative supercoiling favors strand separation, and DNA replication, transcription, recombination and repair, all of which involve strand separation. Also able to catalyze the interconversion of other topological isomers of dsDNA rings, including catenanes and knotted rings. Type II topoisomerases break and join 2 DNA strands simultaneously in an ATP-dependent manner. The sequence is that of DNA gyrase subunit A from Helicobacter pylori (strain ATCC 700392 / 26695) (Campylobacter pylori).